The chain runs to 786 residues: LPS-assembly protein LptD (786 aa).

The first 24 residues, 1 to 24, serve as a signal peptide directing secretion; the sequence is MKKRIPTLLATMIASALYSHQGLA. 2 cysteine pairs are disulfide-bonded: C31/C726 and C173/C727.

The protein belongs to the LptD family. Component of the lipopolysaccharide transport and assembly complex. Interacts with LptE and LptA. In terms of processing, contains two intramolecular disulfide bonds.

The protein localises to the cell outer membrane. In terms of biological role, together with LptE, is involved in the assembly of lipopolysaccharide (LPS) at the surface of the outer membrane. The polypeptide is LPS-assembly protein LptD (Salmonella typhimurium (strain LT2 / SGSC1412 / ATCC 700720)).